A 279-amino-acid chain; its full sequence is Proteasome subunit alpha type-1 (279 aa).

Tyrosine 103 bears the Phosphotyrosine mark. A compositionally biased stretch (basic and acidic residues) spans 235 to 249 (HVAIAKENDNDTPRN). The disordered stretch occupies residues 235 to 279 (HVAIAKENDNDTPRNDDDDDRPSPPEEPAAGPRDPEVLVATEQRP).

It belongs to the peptidase T1A family. The 26S proteasome consists of a 20S proteasome core and two 19S regulatory subunits. The 20S proteasome core is composed of 28 subunits that are arranged in four stacked rings, resulting in a barrel-shaped structure. The two end rings are each formed by seven alpha subunits, and the two central rings are each formed by seven beta subunits. The catalytic chamber with the active sites is on the inside of the barrel. Interacts with PI31.

The protein resides in the cytoplasm. Its subcellular location is the nucleus. The proteasome is a multicatalytic proteinase complex which is characterized by its ability to cleave peptides with Arg, Phe, Tyr, Leu, and Glu adjacent to the leaving group at neutral or slightly basic pH. The proteasome has an ATP-dependent proteolytic activity. The polypeptide is Proteasome subunit alpha type-1 (Prosalpha6) (Drosophila melanogaster (Fruit fly)).